The chain runs to 543 residues: MMFGGYETIEAYEDDLYRDESSSELSVDSEVEFQLYSQIHYAQDLDDVIREEEHEEKNSGNSESSSSKPNQKKLIVLSDSEVIQLSDGSEVITLSDEDSIYRCKGKNVRVQAQENAHGLSSSLQSNELVDKKCKSDIEKPKSEERSGVIREVMIIEVSSSEEEESTISEGDNVESWMLLGCEVDDKDDDILLNLVGCENSVTEGEDGINWSISDKDIEAQIANNRTPGRWTQRYYSANKNIICRNCDKRGHLSKNCPLPRKVRRCFLCSRRGHLLYSCPAPLCEYCPVPKMLDHSCLFRHSWDKQCDRCHMLGHYTDACTEIWRQYHLTTKPGPPKKPKTPSRPSALAYCYHCAQKGHYGHECPEREVYDPSPVSPFICYYDDKYEIQEREKRLKQKIKVLKKNGVIPEPSKLPYIKAANENPHHDIRKGRASWKSNRWPQENKETQKEMKNKNRNWEKHRKADRHREVDEDFPRGPKTYSSPGSFKTQKPSKPFHRSSHYHTSREDKSPKEGKRGKQKKKERCWEDDDNDNLFLIKQRKKKS.

Residues 51 to 71 (EEEHEEKNSGNSESSSSKPNQ) are disordered. Low complexity predominate over residues 59–68 (SGNSESSSSK). Glycyl lysine isopeptide (Lys-Gly) (interchain with G-Cter in SUMO2) cross-links involve residues lysine 131, lysine 139, lysine 141, lysine 239, and lysine 254. 3 CCHC-type zinc fingers span residues 241-258 (IICR…NCPL), 263-280 (RRCF…SCPA), and 304-321 (KQCD…ACTE). Lysine 339 participates in a covalent cross-link: Glycyl lysine isopeptide (Lys-Gly) (interchain with G-Cter in SUMO2). The CCHC-type 4 zinc finger occupies 348-365 (AYCYHCAQKGHYGHECPE). Glycyl lysine isopeptide (Lys-Gly) (interchain with G-Cter in SUMO2) cross-links involve residues lysine 412, lysine 417, and lysine 435. The tract at residues 414–543 (PYIKAANENP…FLIKQRKKKS (130 aa)) is disordered. 2 stretches are compositionally biased toward basic and acidic residues: residues 441 to 457 (QENK…NRNW) and 465 to 475 (RHREVDEDFPR). Lysine 478 is covalently cross-linked (Glycyl lysine isopeptide (Lys-Gly) (interchain with G-Cter in SUMO2)). Polar residues predominate over residues 479-491 (TYSSPGSFKTQKP). A phosphoserine mark is found at serine 482 and serine 485. Glycyl lysine isopeptide (Lys-Gly) (interchain with G-Cter in SUMO2) cross-links involve residues lysine 487, lysine 490, and lysine 493. Positions 493-502 (KPFHRSSHYH) are enriched in basic residues. Residues 503-515 (TSREDKSPKEGKR) show a composition bias toward basic and acidic residues. Lysine 537 participates in a covalent cross-link: Glycyl lysine isopeptide (Lys-Gly) (interchain with G-Cter in SUMO2).

Component of a nucleolar TRAMP-like complex, an ATP-dependent exosome regulatory complex consisting of a helicase (MTREX), an oligadenylate polymerase (TENT4B or TENT4A), and a substrate specific RNA-binding factor (ZCCHC7 or ZCCHC8). Several TRAMP-like complexes exist with specific compositions and are associated with nuclear, or nucleolar RNA exosomes.

It is found in the nucleus. Its subcellular location is the nucleolus. This is Zinc finger CCHC domain-containing protein 7 (ZCCHC7) from Homo sapiens (Human).